Reading from the N-terminus, the 144-residue chain is Small ribosomal subunit protein bS6 (144 aa).

Residues E97–E144 are disordered. Positions R105–E137 are enriched in basic and acidic residues.

It belongs to the bacterial ribosomal protein bS6 family.

Functionally, binds together with bS18 to 16S ribosomal RNA. This is Small ribosomal subunit protein bS6 from Afipia carboxidovorans (strain ATCC 49405 / DSM 1227 / KCTC 32145 / OM5) (Oligotropha carboxidovorans).